Here is a 76-residue protein sequence, read N- to C-terminus: Small ribosomal subunit protein bS18 (76 aa).

The protein belongs to the bacterial ribosomal protein bS18 family. In terms of assembly, part of the 30S ribosomal subunit. Forms a tight heterodimer with protein bS6.

Binds as a heterodimer with protein bS6 to the central domain of the 16S rRNA, where it helps stabilize the platform of the 30S subunit. The protein is Small ribosomal subunit protein bS18 of Pseudomonas entomophila (strain L48).